The sequence spans 260 residues: uncharacterized protein (260 aa).

An N-terminal signal peptide occupies residues 1–22; that stretch reads MKSIKRIGLCISLLILIIFATS. Residue cysteine 23 is the site of N-palmitoyl cysteine attachment. A lipid anchor (S-diacylglycerol cysteine) is attached at cysteine 23.

It belongs to the staphylococcal tandem lipoprotein family.

Its subcellular location is the cell membrane. This is an uncharacterized protein from Staphylococcus aureus (strain N315).